Here is a 413-residue protein sequence, read N- to C-terminus: MQKRVVILLLDSFGIGASEDAKDFGDLGANTLGNIAKACFNNLADSNDRSGALKLPYLEGLGLGLSALEAANELPLGFQPQPNLIGAYAYAQELSSAKDTISGHWEMMGAPVLFEWGYFKDKNDSFPKEILDEIARKTKIKGYLGNCHASGTEIIKDLGEKHLETLYPIFYTSADSVFQIAAHEEKFGLDNLYALCEEAFQILEPLKIARVIARPFIGTNRESFKRTANRKDYAIKPHKKLLFETFIEEKQGEVISIGKIADIYAHVGITQKFKAGSLMELCDVTLEQVKNAKNNSLIFTNFVHFDSDYGHRCDISGYANALEYFDTRLKEVLENLRENDLLILCADHGCDPSFKGTDHTREYIPVLFYHKDLQPAFLGKSDSFADIGQSIAYFLGLSPLDYGKNLLNFKGQP.

Mn(2+) is bound by residues aspartate 11, aspartate 306, histidine 311, aspartate 347, histidine 348, and histidine 359.

It belongs to the phosphopentomutase family. Mn(2+) is required as a cofactor.

The protein localises to the cytoplasm. The catalysed reaction is 2-deoxy-alpha-D-ribose 1-phosphate = 2-deoxy-D-ribose 5-phosphate. It carries out the reaction alpha-D-ribose 1-phosphate = D-ribose 5-phosphate. The protein operates within carbohydrate degradation; 2-deoxy-D-ribose 1-phosphate degradation; D-glyceraldehyde 3-phosphate and acetaldehyde from 2-deoxy-alpha-D-ribose 1-phosphate: step 1/2. Its function is as follows. Isomerase that catalyzes the conversion of deoxy-ribose 1-phosphate (dRib-1-P) and ribose 1-phosphate (Rib-1-P) to deoxy-ribose 5-phosphate (dRib-5-P) and ribose 5-phosphate (Rib-5-P), respectively. The polypeptide is Phosphopentomutase (Helicobacter pylori (strain P12)).